A 150-amino-acid polypeptide reads, in one-letter code: Large ribosomal subunit protein uL15 (150 aa).

A disordered region spans residues 1 to 57; it reads MRLEDIRPQAGSTRRRRRLGRGVSAGQGASCGKGMRGQKARKGGSTRPGFEGGQTPL. Gly residues predominate over residues 23 to 35; the sequence is VSAGQGASCGKGM.

This sequence belongs to the universal ribosomal protein uL15 family. As to quaternary structure, part of the 50S ribosomal subunit.

In terms of biological role, binds to the 23S rRNA. This Synechococcus sp. (strain JA-2-3B'a(2-13)) (Cyanobacteria bacterium Yellowstone B-Prime) protein is Large ribosomal subunit protein uL15.